The primary structure comprises 330 residues: Protein ANTHESIS POMOTING FACTOR 1 (330 aa).

WD repeat units follow at residues 22 to 61 (DFGG…QLKI), 112 to 151 (GHKD…CQGI), 153 to 191 (HLRG…KGPF), 198 to 237 (GDTA…KKCG), 242 to 281 (PSQG…EVAR), and 284 to 323 (NNIG…APAD).

The protein belongs to the WD repeat SWD2 family. Expressed in the shoot apical meristem (SAM), embryos, seedlings, cotyledons, leaves primordia, young leaves and roots.

It localises to the nucleus. Functionally, component of a chromatin regulatory complex involved in regulating chromatin structure in the nucleus. Promotes flowering under long days (LD) via the regulation of bolting. The polypeptide is Protein ANTHESIS POMOTING FACTOR 1 (Arabidopsis thaliana (Mouse-ear cress)).